Reading from the N-terminus, the 186-residue chain is TATA box-binding protein-like 1 (186 aa).

It belongs to the TBP family.

The protein localises to the cytoplasm. It is found in the nucleus. Functionally, part of a specialized transcription system that mediates the transcription of most ribosomal proteins through the 5'-TCT-3' motif which is a core promoter element at these genes. Seems to also mediate the transcription of NF1. Does not bind the TATA box. Members of the TBP family are differentially required to regulate transcription and development during early embryogenesis. Particularly regulates genes that have a role in catabolism. This Xenopus tropicalis (Western clawed frog) protein is TATA box-binding protein-like 1 (tbpl1).